The sequence spans 148 residues: Deoxyuridine 5'-triphosphate nucleotidohydrolase (148 aa).

Substrate is bound by residues Arg67–Gly69, Asn80, Leu84–Asp86, and Met94.

This sequence belongs to the dUTPase family. Mg(2+) serves as cofactor.

It carries out the reaction dUTP + H2O = dUMP + diphosphate + H(+). The protein operates within pyrimidine metabolism; dUMP biosynthesis; dUMP from dCTP (dUTP route): step 2/2. Functionally, this enzyme is involved in nucleotide metabolism: it produces dUMP, the immediate precursor of thymidine nucleotides and it decreases the intracellular concentration of dUTP so that uracil cannot be incorporated into DNA. This Burkholderia ambifaria (strain ATCC BAA-244 / DSM 16087 / CCUG 44356 / LMG 19182 / AMMD) (Burkholderia cepacia (strain AMMD)) protein is Deoxyuridine 5'-triphosphate nucleotidohydrolase.